Here is a 901-residue protein sequence, read N- to C-terminus: Probable inorganic carbon transporter subunit DabA (901 aa).

Zn(2+) contacts are provided by Cys-424, Asp-426, His-606, and Cys-621.

This sequence belongs to the inorganic carbon transporter (TC 9.A.2) DabA family. In terms of assembly, forms a complex with DabB. Requires Zn(2+) as cofactor.

The protein resides in the cell membrane. Its function is as follows. Part of an energy-coupled inorganic carbon pump. This chain is Probable inorganic carbon transporter subunit DabA, found in Staphylococcus aureus (strain NCTC 8325 / PS 47).